A 110-amino-acid polypeptide reads, in one-letter code: UPF0339 protein PA0329 (110 aa).

Tandem repeats lie at residues 10 to 58 (AKDG…AFEV) and 61 to 109 (ANNG…LSDE). A disordered region spans residues 91–110 (EAGVQSVKRATPEAGLSDES).

This sequence belongs to the UPF0339 family. Duplicated subfamily.

This Pseudomonas aeruginosa (strain ATCC 15692 / DSM 22644 / CIP 104116 / JCM 14847 / LMG 12228 / 1C / PRS 101 / PAO1) protein is UPF0339 protein PA0329.